Consider the following 34-residue polypeptide: Crassicorin-II (34 aa).

C6 and C30 are oxidised to a cystine.

In terms of tissue distribution, highly expressed by the mesenteries. Moderately expressed by the pharynx. Weakly expressed by the gonad and pedal disk. No expression in tentacle.

The protein localises to the secreted. It localises to the nematocyst. In terms of biological role, peptide with both antimicrobial and neurotoxin activities. Cationic AMP with antimicrobial activity against both Gram-positive bacteria (B.subtilis) and Gram-negative bacteria (E.coli and S.enterica). Shows no significant antimicrobial activity against bacteria S.aureus and P.aeruginosa, as well as the fungus C.albicans. In vivo, induces reversible paralytic activity towards the shrimp P.paucidens. May act by impairing sodium or potassium channels in the prey. The chain is Crassicorin-II from Urticina crassicornis (Mottled anemone).